A 338-amino-acid chain; its full sequence is Nucleoid-associated protein HI_0839 (338 aa).

The protein belongs to the YejK family.

The protein localises to the cytoplasm. Its subcellular location is the nucleoid. This chain is Nucleoid-associated protein HI_0839, found in Haemophilus influenzae (strain ATCC 51907 / DSM 11121 / KW20 / Rd).